The following is a 208-amino-acid chain: Attacin-A (208 aa).

The N-terminal stretch at 1 to 20 (MQSFKICFFISCLSVVLVKG) is a signal peptide. Residues 21 to 47 (QFGGTVSSNPNGGLDVNARLSKTIGDP) constitute a propeptide that is removed on maturation.

Hemolymph and fat body.

The protein resides in the secreted. Its function is as follows. Hemolymph antibacterial protein against Gram-negative bacteria. This Glossina morsitans morsitans (Savannah tsetse fly) protein is Attacin-A.